We begin with the raw amino-acid sequence, 277 residues long: Large ribosomal subunit protein uL2 (277 aa).

A disordered region spans residues 223 to 277 (VTMNPVDHPHGGGEGRTSGGRHPVTPWGKPTKGMKTRSNKATDKFIVTSRHKRKK).

The protein belongs to the universal ribosomal protein uL2 family. Part of the 50S ribosomal subunit. Forms a bridge to the 30S subunit in the 70S ribosome.

In terms of biological role, one of the primary rRNA binding proteins. Required for association of the 30S and 50S subunits to form the 70S ribosome, for tRNA binding and peptide bond formation. It has been suggested to have peptidyltransferase activity; this is somewhat controversial. Makes several contacts with the 16S rRNA in the 70S ribosome. The polypeptide is Large ribosomal subunit protein uL2 (Azorhizobium caulinodans (strain ATCC 43989 / DSM 5975 / JCM 20966 / LMG 6465 / NBRC 14845 / NCIMB 13405 / ORS 571)).